The chain runs to 531 residues: Peptide chain release factor 3 (531 aa).

Residues 10-278 (RRRRTFAIIS…SLIDWAPAPK (269 aa)) form the tr-type G domain. GTP is bound by residues 19–26 (SHPDAGKT), 87–91 (DTPGH), and 141–144 (NKYD).

Belongs to the TRAFAC class translation factor GTPase superfamily. Classic translation factor GTPase family. PrfC subfamily.

The protein resides in the cytoplasm. Increases the formation of ribosomal termination complexes and stimulates activities of RF-1 and RF-2. It binds guanine nucleotides and has strong preference for UGA stop codons. It may interact directly with the ribosome. The stimulation of RF-1 and RF-2 is significantly reduced by GTP and GDP, but not by GMP. The chain is Peptide chain release factor 3 from Neisseria gonorrhoeae (strain ATCC 700825 / FA 1090).